Here is a 140-residue protein sequence, read N- to C-terminus: Large-conductance mechanosensitive channel 2 (140 aa).

The next 3 membrane-spanning stretches (helical) occupy residues 8–28 (FISKGNVMDLAVGVIIGAAFG), 30–50 (IVDSLVNDIIMPVIGAIFGGL), and 81–101 (GSFITVALNFVILAFIIFLMV).

This sequence belongs to the MscL family. In terms of assembly, homopentamer.

Its subcellular location is the cell inner membrane. Channel that opens in response to stretch forces in the membrane lipid bilayer. May participate in the regulation of osmotic pressure changes within the cell. This Mesorhizobium japonicum (strain LMG 29417 / CECT 9101 / MAFF 303099) (Mesorhizobium loti (strain MAFF 303099)) protein is Large-conductance mechanosensitive channel 2.